A 316-amino-acid polypeptide reads, in one-letter code: DNA-directed RNA polymerase subunit alpha (316 aa).

The tract at residues 1–233 is alpha N-terminal domain (alpha-NTD); that stretch reads MCMSQFPIEF…HWFNPLQTLE (233 aa). Positions 245–316 are alpha C-terminal domain (alpha-CTD); the sequence is MAQLSNMLIE…LHCQLKKYVD (72 aa).

This sequence belongs to the RNA polymerase alpha chain family. In terms of assembly, in plastids the minimal PEP RNA polymerase catalytic core is composed of four subunits: alpha, beta, beta', and beta''. When a (nuclear-encoded) sigma factor is associated with the core the holoenzyme is formed, which can initiate transcription.

It is found in the plastid. Its subcellular location is the chloroplast. It catalyses the reaction RNA(n) + a ribonucleoside 5'-triphosphate = RNA(n+1) + diphosphate. Functionally, DNA-dependent RNA polymerase catalyzes the transcription of DNA into RNA using the four ribonucleoside triphosphates as substrates. This chain is DNA-directed RNA polymerase subunit alpha, found in Cyanidioschyzon merolae (strain NIES-3377 / 10D) (Unicellular red alga).